The sequence spans 434 residues: Polyadenylate-binding protein RBP47C' (434 aa).

Positions 1–50 are disordered; the sequence is MADVKVQSESESSDSHPLVDYQSLPPYPPPHPPVEVEENQPKTSPTPPPP. RRM domains lie at 103-185, 199-278, and 306-378; these read KTIW…WASF, LSIF…PATP, and TTIF…WGRN.

This sequence belongs to the polyadenylate-binding RBP47 family. Interacts with the poly(A) tail of mRNA in nucleus.

It is found in the nucleus. The protein resides in the cytoplasmic granule. Functionally, heterogeneous nuclear ribonucleoprotein (hnRNP)-protein binding the poly(A) tail of mRNA and probably involved in some steps of pre-mRNA maturation. This Arabidopsis thaliana (Mouse-ear cress) protein is Polyadenylate-binding protein RBP47C' (RBP47C').